The following is a 582-amino-acid chain: MTTELAAAPVLSTPDDRILEETDPVVPQTNRILSEEELAITYDIERTLKEIRQARYKRIALQFPDEMLPDAPRVFQLLSRGLEARDIVDGGSKANTETEPTDGLVDSASRLDLKDADEWSPKLYILADTSYGTCCVDEVAAEHVDADVVVHYGRSCLSPTARLPVIYVFTHKELPLDPVLKAFKETYPDPETKVILAADVTYSDHIPEVYSRLVQEGYSSLFATALVHDPSSVIPNRTVPDSVKEAPESLGNWQLFHISEPPTALLLTLASRVAAIHIYPTDGPAGTDVKPLPASTAMVLRRRYAILTRLSTVPIFGILVNTLSVKNYLHIVDHVRDKIAAAGKKSYMFVVGKLNAAKVANFSEIGGWVVIGCWESSLVDSKDFWKPVITPFELEVALKGDEERVWTGAWQSDFQSILDQPPPSSNSPGNSQEANEGPEFGDHARDEDEDAMSEPESAPPEFDLRTGRYVSYSRPMRDSAPRVSASQGATAAISAQTGAADGPSAARALARRAKGDLAMVGNTFSPGAEFLRSQRTWTGLGSDFNSAANVEYDDEENDSTLVVQGRKGIARGYTVGDSIDRH.

Cys135, Cys156, and Cys373 together coordinate [4Fe-4S] cluster. Residues 416–467 are disordered; that stretch reads SILDQPPPSSNSPGNSQEANEGPEFGDHARDEDEDAMSEPESAPPEFDLRTG.

Belongs to the DPH1/DPH2 family. DPH2 subfamily. In terms of assembly, component of the 2-(3-amino-3-carboxypropyl)histidine synthase complex composed of dph1, dph2, dph3 and a NADH-dependent reductase, predominantly cbr1. [4Fe-4S] cluster is required as a cofactor.

It localises to the cytoplasm. It participates in protein modification; peptidyl-diphthamide biosynthesis. Functionally, required for the first step of diphthamide biosynthesis, a post-translational modification of histidine which occurs in elongation factor 2. Dph1 and dph2 transfer a 3-amino-3-carboxypropyl (ACP) group from S-adenosyl-L-methionine (SAM) to a histidine residue, the reaction is assisted by a reduction system comprising dph3 and a NADH-dependent reductase, predominantly cbr1. Facilitates the reduction of the catalytic iron-sulfur cluster found in the dph1 subunit. This Emericella nidulans (strain FGSC A4 / ATCC 38163 / CBS 112.46 / NRRL 194 / M139) (Aspergillus nidulans) protein is 2-(3-amino-3-carboxypropyl)histidine synthase subunit 2 (dph2).